The primary structure comprises 372 residues: GTPase Obg (372 aa).

In terms of domain architecture, Obg spans 1–159 (MAFVDEAKFF…KWLLIELKLM (159 aa)). The segment at 121-141 (GSGGMGNPHFSSGSNRTPRVA) is disordered. The region spanning 160–329 (ADVGLVGLPN…LVKLIGDIID (170 aa)) is the OBG-type G domain. GTP contacts are provided by residues 166–173 (GLPNAGKS), 191–195 (FTTLE), 213–216 (DIPG), 280–283 (NKCD), and 310–312 (SAI). Serine 173 and threonine 193 together coordinate Mg(2+). Positions 346 to 372 (QDLKKQKEEERRQELKKQKEEEQAKDE) are disordered.

Belongs to the TRAFAC class OBG-HflX-like GTPase superfamily. OBG GTPase family. As to quaternary structure, monomer. It depends on Mg(2+) as a cofactor.

It localises to the cytoplasm. Functionally, an essential GTPase which binds GTP, GDP and possibly (p)ppGpp with moderate affinity, with high nucleotide exchange rates and a fairly low GTP hydrolysis rate. Plays a role in control of the cell cycle, stress response, ribosome biogenesis and in those bacteria that undergo differentiation, in morphogenesis control. The sequence is that of GTPase Obg from Desulfotalea psychrophila (strain LSv54 / DSM 12343).